Here is a 1031-residue protein sequence, read N- to C-terminus: NACHT, LRR and PYD domains-containing protein 3 (1031 aa).

A Pyrin domain is found at 1-93; the sequence is MRMVSVRCKL…YEKAKREEPE (93 aa). S5 is modified (phosphoserine). Phosphotyrosine is present on Y13. C125 carries S-palmitoyl cysteine lipidation. A required for binding to phosphatidylinositol 4-phosphate (PtdIns4P) region spans residues 126–129; it reads RKKK. 3 positions are modified to phosphotyrosine: Y131, Y135, and Y138. The 73-residue stretch at 135–207 folds into the FISNA domain; that stretch reads YRKYVRSKFQ…SSVNLELLFD (73 aa). S156 is subject to Phosphoserine. Position 164 (T164) interacts with ATP. A phosphoserine mark is found at S195 and S198. The region spanning 217-533 is the NACHT domain; the sequence is HTVVFQGAAG…EFFAAMYYLL (317 aa). Residue 223–230 participates in ATP binding; sequence GAAGIGKT. Phosphoserine is present on residues S262 and S292. Residue K321 forms a Glycyl lysine isopeptide (Lys-Gly) (interchain with G-Cter in ubiquitin) linkage. S331 bears the Phosphoserine mark. A KFERQ-like motif 1 motif is present at residues 352–356; that stretch reads LEKLQ. K427 participates in a covalent cross-link: Glycyl lysine isopeptide (Lys-Gly) (interchain with G-Cter in ubiquitin). H519 is an ATP binding site. A KFERQ-like motif 2 motif is present at residues 601–605; the sequence is KIRLE. A Glycyl lysine isopeptide (Lys-Gly) (interchain with G-Cter in ubiquitin) cross-link involves residue K687. 2 positions are modified to phosphoserine: S723 and S730. LRR repeat units lie at residues 737-757, 766-787, 794-814, 823-844, and 851-871; these read NLTELNLSGNTLGDPGMNVLC, NIRRLWLGQCCLSHQCCFNISS, KLVELDLSHNALGDFGIRLLC, NLKKLWLVSCCLTSASCEDLAS, and SLTRLYLGENALGDSGVGILC. The KFERQ-like motif 3 signature appears at 793-797; it reads QKLVE. S801 is subject to Phosphoserine. 3 S-palmitoyl cysteine lipidation sites follow: C832, C833, and C839. A Phosphotyrosine modification is found at Y856. K873 is covalently cross-linked (Glycyl lysine isopeptide (Lys-Gly) (interchain with G-Cter in ubiquitin)). 4 LRR repeats span residues 880 to 901, 908 to 929, 937 to 958, and 965 to 986; these read NLQKLGLVNSGLTSGCCPALSS, NLTHLYLQGNALGDMGVKLLCE, KLQVLELDNCSLTSHCCWDLST, and SLRKLCLGNNDLGDLGVMLLCE. C953 carries S-palmitoyl cysteine lipidation. Residue K968 forms a Glycyl lysine isopeptide (Lys-Gly) (interchain with G-Cter in ubiquitin) linkage. The KFERQ-like motif 4 motif lies at 986 to 990; sequence EVLKQ. At S1030 the chain carries Phosphoserine.

Belongs to the NLRP family. Sensor component of NLRP3 inflammasomes; inflammasomes are supramolecular complexes that assemble in the cytosol in response to pathogens and other damage-associated signals and play critical roles in innate immunity and inflammation. The core of NLRP3 inflammasomes consists of a signal sensor component (NLRP3), an adapter (PYCARD/ASC), which recruits an effector pro-inflammatory caspase (CASP1 and, possibly, CASP4 and CASP5). Homodecamer; inactive NLRP3 forms homodecameric double-ring cages that hide pyrin domains within NACHT-LRR rings to avoid premature activation. Interacts (via pyrin domain) with PYCARD/ASC (via pyrin domain); interaction is direct. Interacts (via LRR repeat domain) with NEK7 (via N-terminus); the interaction is required for the formation of the complex NLRP3:PYCARD, oligomerization of PYCARD/ASC and activation of CASP1. Interacts (via LRR repeat domain) with NR4A1/Nur77 (via N-terminus); the interaction is direct, requires activation of NR4A1 by its ligands NBRE-containing dsDNA and lipopolysaccharide, and stimulates the association of NLRP3 with NEK7 for non-canonical NLRP3 inflammasome activation. Interacts with CARD8; leading to inhibit formation of the NLRP3 inflammasome. Interacts with MEFV; this interaction targets NLRP3 to degradation by autophagy, hence preventing excessive IL1B- and IL18-mediated inflammation. Interacts with EIF2AK2/PKR; this interaction requires EIF2AK2 activity, is accompanied by EIF2AK2 autophosphorylation and promotes inflammasome assembly in response to specific stimuli. Interacts with GBP5 (via DAPIN domain); this interaction promotes inflammasome assembly in response to microbial and soluble, but not crystalline, agents. Interacts with PML (isoform PML-1) (via the leucine-rich repeat (LRR) domain); PML-mediated increase in NLRP3 inflammasome activation does not depend upon this interaction. Interacts (via NACHT domain) with DHX33 (via DEAH box); NLRP3 activation in presence of cytosolic dsRNA is mediated by DHX33. Interacts (via NACHT and LRR domains) with ARRB2; this interaction is direct and inducible by polyunsaturated fatty acids (PUFAs). Interacts (via NACHT domain) with DDX3X under both LPS-primed and inflammasome-activating conditions. Interacts with IRF4 (via the LRR domain); this interaction is direct and is required for optimal IRF4 binding to IL4 promoter and efficient IL4 transactivation during differentiation of Th2 helper T-cells. Interacts with MAVS; promoting localization to mitochondria and activation of the NLRP3 inflammasome. Interacts with MARK4; promoting localization of NLRP3 to the microtubule organizing center (MTOC). Interacts with TRIM50; this interaction also promotes NLRP3 oligomerization and subsequent inflammasome activation. Interacts with IRGM; preventing NLRP3 inflammasome assembly and promoting NLRP3 degradation. Interacts (via KFERQ-like motifs) with HSPA8/HSC70; promoting NLRP3 degradation by the chaperone-mediated autophagy pathway. Interacts (via NACHT and LLR domains) with ABHD8; this interaction is enhanced in the presence of NLRP3 inflammasome inducers, such as ATP, nigericin, silica, or alum. Interaction with ABHD8 leads the recruitment of ZDHHC12, hence facilitating NLRP3 palmitoylation and degradation by the chaperone-mediated autophagy pathway (CMA), therefore attenuating NLRP3 inflammasome activation. In terms of processing, phosphorylation at Ser-198 by MAPK8/JNK1 increases inflammasome activation by promoting deubiquitination by BRCC3 and NLRP3 homooligomerization. Phosphorylation at Ser-801 by CSNK1A1 prevents inflammasome activation by preventing NEK7 recruitment. Phosphorylation at Ser-5 in the pyrin domain inhibits homomultimerization of NLRP3 and activation of the NLRP3 inflammasome: dephosphorylation by protein phosphatase 2A (PP2A) promotes assembly of the NLRP3 inflammasome. Phosphorylation at Ser-292 by PKD/PRKD1 promotes NLRP3 inflammasome assembly. Phosphorylation by ERK1/MAPK3 promotes NLRP3 inflammasome assembly. Phosphorylation by BTK (at Tyr-131, Tyr-135 and Tyr-138) in the region that mediates binding to phosphatidylinositol phosphate, promotes relocalization of NLRP3 and assembly of the NLRP3 inflammasome. Phosphorylation at Tyr-856 inhibits NLRP3 inflammasome assembly: dephosphorylation by PTPN22 promotes inflammasome activation. Phosphorylated by LATS1 and LATS2 at Ser-262 following palmitoylation by ZDHHC1, promoting its relocalization to the microtubule organizing center (MTOC), where NLRP3 is activated by NEK7, leading to inflammasome assembly and activation. Post-translationally, ubiquitinated; undergoes both 'Lys-48'- and 'Lys-63'-linked polyubiquitination. Ubiquitination does not lead to degradation, but inhibits inflammasome activation. Deubiquitination is catalyzed by BRCC3 and associated with NLRP3 activation and inflammasome assembly. This process can be induced by the activation of Toll-like receptors (by LPS), through a non-transcriptional pathway dependent on the mitochondrial production of reactive oxygen species, and by ATP. Ubiquitinated by TRIM31 via 'Lys-48'-linked ubiquitination, leading to its degradation by the proteasome. Ubiquitinated at Lys-687 by the SCF(FBXL2) complex, leading to its degradation by the proteasome. Ubiquitinated by TRIM35 via 'lys-48' and 'Lys-63'-linked ubiquitination leading to inhibition of NLRP3 inflammasome activation. Undergoes 'Lys-27'-linked polyubiquitination by MARCHF5, leading to NLRP3-NEK7 complex formation and NLRP3 oligomerization. Palmitoylation by ZDHHC12 promotes NLRP3 degradation by the chaperone-mediated autophagy pathway (CMA) and therefore limits NLRP3 inflammasome activation. Interaction with ZDHHC12, and hence NLRP3 palmitoylation, is greatly enhanced by ABHD8. Following palmitoylation, HSPA8/HSC70 recognizes and binds the KFERQ-like motifs on NLRP3 and promotes NLRP3 recruitment to lysosomes, where it is degraded via the chaperone-mediated autophagy pathway in a LAMP2-dependent process. Palmitoylation at Cys-832 and Cys-833 by ZDHHC5 enhances its binding to NEK7 leading to inflammasome assembly and activation. Palmitoylation at Cys-125 and Cys-953 by ZDHHC1 facilitates phosphorylation at Ser-262 by LATS1 and LATS2, promoting its relocalization to the microtubule organizing center (MTOC), where NLRP3 is activated by NEK7, leading to inflammasome assembly and activation. Depalmitoylated by ABHD17A. In terms of processing, degraded via selective autophagy following interaction with IRGM. IRGM promotes NLRP3 recruitment to autophagosome membranes, promoting its SQSTM1/p62-dependent autophagy-dependent degradation.

It is found in the cytoplasm. It localises to the cytosol. The protein localises to the inflammasome. Its subcellular location is the cytoskeleton. The protein resides in the microtubule organizing center. It is found in the golgi apparatus membrane. It localises to the endoplasmic reticulum. The protein localises to the mitochondrion. Its subcellular location is the secreted. The protein resides in the nucleus. It catalyses the reaction ATP + H2O = ADP + phosphate + H(+). Under resting conditions, NLRP3 binds ADP and is autoinhibited. Inactive NLRP3 forms homodecameric double-ring cages that hide pyrin domains within NACHT-LRR rings to avoid premature activation. NLRP3 activation stimuli include extracellular ATP, nigericin, reactive oxygen species, crystals of monosodium urate or cholesterol, amyloid-beta fibers, environmental or industrial particles and nanoparticles, such as asbestos, silica, aluminum salts, cytosolic dsRNA, etc. Almost all stimuli trigger intracellular K(+) efflux. These stimuli lead to membrane perturbations that induce activation of NLRP3. Upon activation, NLRP3 is transported to microtubule organizing center (MTOC), where it is unlocked by NEK7, leading to its relocalization to dispersed trans-Golgi network (dTGN) vesicle membranes and recruitment of PYCARD/ASC for the formation of an active inflammasome complex. NEK7-activated NLRP3 forms a disk-shaped inflammasome. NLRP3 and PYCARD/ASC interact via their respective pyrin domains; interaction initiates speck formation (nucleation) which greatly enhances further addition of soluble PYCARD/ASC molecules to the speck in a prion-like polymerization process. Clustered PYCARD/ASC nucleates the formation of CASP1 filaments through the interaction of their respective CARD domains, acting as a platform for CASP1 polymerization and activation. Active CASP1 then processes IL1B and IL18 precursors, leading to the release of mature cytokines in the extracellular milieu and inflammatory response. NLRP3 inflammasome assembly is inhibited by IRGM, which impedes NLRP3 oligomerization. NLRP3 inflammasome is inhibited by cyclic AMP (cAMP), which directly binds NLRP3; inhibition is relieved by calcium-sensing receptor CASR, which inhibits production of cAMP. Specifically inhibited by sulfonylurea MCC950 (also named CP-456,773, CRID3), a potent and specific small-molecule inhibitor of the NLRP3 inflammasome that acts by preventing ATP hydrolysis. Its function is as follows. Sensor component of the NLRP3 inflammasome, which mediates inflammasome activation in response to defects in membrane integrity, leading to secretion of inflammatory cytokines IL1B and IL18 and pyroptosis. In response to pathogens and other damage-associated signals that affect the integrity of membranes, initiates the formation of the inflammasome polymeric complex composed of NLRP3, CASP1 and PYCARD/ASC. Recruitment of pro-caspase-1 (proCASP1) to the NLRP3 inflammasome promotes caspase-1 (CASP1) activation, which subsequently cleaves and activates inflammatory cytokines IL1B and IL18 and gasdermin-D (GSDMD), promoting cytokine secretion and pyroptosis. Activation of NLRP3 inflammasome is also required for HMGB1 secretion; stimulating inflammatory responses. Under resting conditions, ADP-bound NLRP3 is autoinhibited. NLRP3 activation stimuli include extracellular ATP, nigericin, reactive oxygen species, crystals of monosodium urate or cholesterol, amyloid-beta fibers, environmental or industrial particles and nanoparticles, such as asbestos, silica, aluminum salts, cytosolic dsRNA, etc. Almost all stimuli trigger intracellular K(+) efflux. These stimuli lead to membrane perturbation and activation of NLRP3. Upon activation, NLRP3 is transported to microtubule organizing center (MTOC), where it is unlocked by NEK7, leading to its relocalization to dispersed trans-Golgi network (dTGN) vesicle membranes and formation of an active inflammasome complex. Associates with dTGN vesicle membranes by binding to phosphatidylinositol 4-phosphate (PtdIns4P). Shows ATPase activity. In terms of biological role, independently of inflammasome activation, regulates the differentiation of T helper 2 (Th2) cells and has a role in Th2 cell-dependent asthma and tumor growth. During Th2 differentiation, required for optimal IRF4 binding to IL4 promoter and for IRF4-dependent IL4 transcription. Binds to the consensus DNA sequence 5'-GRRGGNRGAG-3'. May also participate in the transcription of IL5, IL13, GATA3, CCR3, CCR4 and MAF. This chain is NACHT, LRR and PYD domains-containing protein 3 (NLRP3), found in Bos taurus (Bovine).